The chain runs to 270 residues: Oxidized low-density lipoprotein receptor 1 (270 aa).

The segment covering 1–14 (MTVDDPKGMKDQLD) has biased composition (basic and acidic residues). Residues 1 to 22 (MTVDDPKGMKDQLDQKPNGKTA) form a disordered region. At 1–33 (MTVDDPKGMKDQLDQKPNGKTAKGFVSSWRWYP) the chain is on the cytoplasmic side. The helical; Signal-anchor for type II membrane protein transmembrane segment at 34–56 (AAVTLGVLCLGLLVTVILLILQL) threads the bilayer. Cys42 is lipidated: S-palmitoyl cysteine. A neck region spans residues 57 to 146 (SQVSDLIKKQ…SGPCPQDWLW (90 aa)). Over 57 to 270 (SQVSDLIKKQ…QKKANLLRAQ (214 aa)) the chain is Extracellular. N-linked (GlcNAc...) asparagine glycans are attached at residues Asn69 and Asn135. Residues 85–135 (RRSEKSAQESQKELKEMIETLAHKLDEKSKKLMELHRQNLNLQEVLKEAAN) are a coiled coil. 3 disulfide bridges follow: Cys140–Cys151, Cys168–Cys260, and Cys239–Cys252. One can recognise a C-type lectin domain in the interval 147–261 (HEENCYQFSS…CILTAFSICQ (115 aa)).

In terms of assembly, homodimer; disulfide-linked. May form a hexamer composed of 3 homodimers. Interacts with HSP70. N-glycosylated. Highly expressed in endothelial cells, aortic intima and lung. Expressed at low level in other tissues.

The protein resides in the cell membrane. It is found in the membrane raft. Its subcellular location is the secreted. Its function is as follows. Receptor that mediates the recognition, internalization and degradation of oxidatively modified low density lipoprotein (oxLDL) by vascular endothelial cells. OxLDL is a marker of atherosclerosis that induces vascular endothelial cell activation and dysfunction, resulting in pro-inflammatory responses, pro-oxidative conditions and apoptosis. Its association with oxLDL induces the activation of NF-kappa-B through an increased production of intracellular reactive oxygen and a variety of pro-atherogenic cellular responses including a reduction of nitric oxide (NO) release, monocyte adhesion and apoptosis. In addition to binding oxLDL, it acts as a receptor for the HSP70 protein involved in antigen cross-presentation to naive T-cells in dendritic cells, thereby participating in cell-mediated antigen cross-presentation. Also involved in inflammatory process, by acting as a leukocyte-adhesion molecule at the vascular interface in endotoxin-induced inflammation. Also acts as a receptor for advanced glycation end (AGE) products, activated platelets, monocytes, apoptotic cells and both Gram-negative and Gram-positive bacteria. The chain is Oxidized low-density lipoprotein receptor 1 (OLR1) from Bos taurus (Bovine).